We begin with the raw amino-acid sequence, 84 residues long: Large ribosomal subunit protein bL27 (84 aa).

Residues 1–22 (MAHKKAGGSTRNGRDSESKRLG) form a disordered region.

Belongs to the bacterial ribosomal protein bL27 family.

The sequence is that of Large ribosomal subunit protein bL27 from Shewanella woodyi (strain ATCC 51908 / MS32).